A 466-amino-acid chain; its full sequence is Cysteine--tRNA ligase (466 aa).

Zn(2+) is bound at residue cysteine 28. Residues 30 to 40 carry the 'HIGH' region motif; the sequence is PTVYNYIHIGN. Residues cysteine 208, histidine 233, and glutamate 237 each contribute to the Zn(2+) site. The short motif at 265-269 is the 'KMSKS' region element; the sequence is KMSKS. Residue lysine 268 participates in ATP binding.

It belongs to the class-I aminoacyl-tRNA synthetase family. In terms of assembly, monomer. The cofactor is Zn(2+).

It is found in the cytoplasm. It carries out the reaction tRNA(Cys) + L-cysteine + ATP = L-cysteinyl-tRNA(Cys) + AMP + diphosphate. The chain is Cysteine--tRNA ligase from Staphylococcus saprophyticus subsp. saprophyticus (strain ATCC 15305 / DSM 20229 / NCIMB 8711 / NCTC 7292 / S-41).